The primary structure comprises 631 residues: Mu-like prophage FluMu protein gp42 (631 aa).

The next 2 membrane-spanning stretches (helical) occupy residues 56–76 and 385–405; these read LGNITIPIIGVGAAAGATMVG and GLADGVAGALGATVGVTPVYV. Residues 425-453 form a disordered region; it reads IEDGRDKDKKTQKKNKPPRPKRGRGSVRS. Basic residues predominate over residues 434–449; the sequence is KTQKKNKPPRPKRGRG. 3 helical membrane-spanning segments follow: residues 455–475, 495–515, and 543–563; these read VAAVAASAAAVPKVAAPVTTA, SKAVPYLGTGLAVAEGVTVLM, and ALIPIPVVGAAVGSYLGGWLG.

To phage Mu protein gp42.

It is found in the cell membrane. The protein is Mu-like prophage FluMu protein gp42 of Haemophilus influenzae (strain ATCC 51907 / DSM 11121 / KW20 / Rd).